We begin with the raw amino-acid sequence, 340 residues long: Sesquiterpene synthase 6 (340 aa).

Residues Asp-90, Asn-229, Ser-233, and Glu-237 each contribute to the Mg(2+) site. Residues 90 to 94 carry the DDXXD motif motif; sequence DDITD. An NSE/DTE motif motif is present at residues 229–237; the sequence is NDIYSFNNE. (2E,6E)-farnesyl diphosphate-binding residues include Arg-316 and Tyr-317.

The protein belongs to the terpene synthase family. Mg(2+) serves as cofactor.

The catalysed reaction is (2E,6E)-farnesyl diphosphate = delta-cadinene + diphosphate. It carries out the reaction (2E,6E)-farnesyl diphosphate = bicyclogermacrene + diphosphate. Functionally, terpene cyclase that catalyzes the cyclization of farnesyl diphosphate (FPP) to various sesquiterpenes, including bicycloelemene, alpha-gurjunene, 9-epi-caryophylene, bicyclosesquiphellandrene, bicyclogermacrene and delta-cadinene. This chain is Sesquiterpene synthase 6, found in Postia placenta (strain ATCC 44394 / Madison 698-R) (Brown rot fungus).